Reading from the N-terminus, the 178-residue chain is ATP synthase subunit b, chloroplastic (178 aa).

A helical membrane pass occupies residues 34 to 50; sequence LAILTGGIFYLGSNALS.

Belongs to the ATPase B chain family. As to quaternary structure, F-type ATPases have 2 components, F(1) - the catalytic core - and F(0) - the membrane proton channel. F(1) has five subunits: alpha(3), beta(3), gamma(1), delta(1), epsilon(1). F(0) has four main subunits: a(1), b(1), b'(1) and c(10-14). The alpha and beta chains form an alternating ring which encloses part of the gamma chain. F(1) is attached to F(0) by a central stalk formed by the gamma and epsilon chains, while a peripheral stalk is formed by the delta, b and b' chains.

It is found in the plastid. The protein localises to the chloroplast thylakoid membrane. Functionally, f(1)F(0) ATP synthase produces ATP from ADP in the presence of a proton or sodium gradient. F-type ATPases consist of two structural domains, F(1) containing the extramembraneous catalytic core and F(0) containing the membrane proton channel, linked together by a central stalk and a peripheral stalk. During catalysis, ATP synthesis in the catalytic domain of F(1) is coupled via a rotary mechanism of the central stalk subunits to proton translocation. Its function is as follows. Component of the F(0) channel, it forms part of the peripheral stalk, linking F(1) to F(0). This Ochrosphaera neapolitana protein is ATP synthase subunit b, chloroplastic.